The following is a 165-amino-acid chain: NADPH-dependent 7-cyano-7-deazaguanine reductase (165 aa).

C56 functions as the Thioimide intermediate in the catalytic mechanism. The Proton donor role is filled by D63. Substrate contacts are provided by residues 78–80 (VES) and 97–98 (HE).

This sequence belongs to the GTP cyclohydrolase I family. QueF type 1 subfamily.

Its subcellular location is the cytoplasm. It carries out the reaction 7-aminomethyl-7-carbaguanine + 2 NADP(+) = 7-cyano-7-deazaguanine + 2 NADPH + 3 H(+). It participates in tRNA modification; tRNA-queuosine biosynthesis. Functionally, catalyzes the NADPH-dependent reduction of 7-cyano-7-deazaguanine (preQ0) to 7-aminomethyl-7-deazaguanine (preQ1). The protein is NADPH-dependent 7-cyano-7-deazaguanine reductase of Bacillus pumilus (strain SAFR-032).